A 402-amino-acid polypeptide reads, in one-letter code: Glutamyl-tRNA reductase (402 aa).

Residues 48–51 (TCNR), Ser-91, 96–98 (EDQ), and Gln-102 contribute to the substrate site. Catalysis depends on Cys-49, which acts as the Nucleophile. 171–176 (GAGKMG) serves as a coordination point for NADP(+).

It belongs to the glutamyl-tRNA reductase family. As to quaternary structure, homodimer.

The catalysed reaction is (S)-4-amino-5-oxopentanoate + tRNA(Glu) + NADP(+) = L-glutamyl-tRNA(Glu) + NADPH + H(+). It functions in the pathway porphyrin-containing compound metabolism; protoporphyrin-IX biosynthesis; 5-aminolevulinate from L-glutamyl-tRNA(Glu): step 1/2. In terms of biological role, catalyzes the NADPH-dependent reduction of glutamyl-tRNA(Glu) to glutamate 1-semialdehyde (GSA). This chain is Glutamyl-tRNA reductase, found in Methanothermobacter thermautotrophicus (strain ATCC 29096 / DSM 1053 / JCM 10044 / NBRC 100330 / Delta H) (Methanobacterium thermoautotrophicum).